A 1435-amino-acid polypeptide reads, in one-letter code: Protein clueless (1435 aa).

The segment at 1–97 (MALEMDSKNS…KPEGDGDADA (97 aa)) is disordered. Positions 18–35 (AAAATTKTNKAKENNNLA) are enriched in low complexity. The span at 38-50 (KKNQSQNLVNGNG) shows a compositional bias: polar residues. The segment covering 58-67 (TKKKGKKNRN) has biased composition (basic residues). Position 266 is a phosphoserine (Ser266). A Clu domain is found at 420–662 (RAEDAFSSKL…RTFPPDVNFL (243 aa)). Basic and acidic residues-rich tracts occupy residues 719–731 (KKPE…EKKQ) and 752–762 (PNEKEKDTPVE). 2 disordered regions span residues 719 to 762 (KKPE…TPVE) and 952 to 998 (VSND…SSSS). Residues 959 to 975 (KKRGGNGGKHNKHKSSK) show a composition bias toward basic residues. The span at 988 to 998 (NGGSTTSSSSS) shows a compositional bias: low complexity. TPR repeat units follow at residues 1096-1129 (AYNF…LNNV), 1222-1255 (ALID…NLKY), and 1257-1290 (GNKA…EKET). The disordered stretch occupies residues 1407 to 1435 (EVLAPQDNNKEQAATAQQLTNGDKVAVSS). Residues 1417–1435 (EQAATAQQLTNGDKVAVSS) are compositionally biased toward polar residues.

Belongs to the CLU family.

It localises to the cytoplasm. In terms of biological role, mRNA-binding protein involved in proper cytoplasmic distribution of mitochondria. The sequence is that of Protein clueless from Drosophila persimilis (Fruit fly).